The sequence spans 776 residues: ADP-ribosylation factor GTPase-activating protein AGD2 (776 aa).

Residues 2 to 226 (AGFINLEDSP…IHQVLTYAQQ (225 aa)) enclose the BAR domain. The tract at residues 248-267 (QSELDSQQASAKADPSDVGG) is disordered. The PH domain occupies 290 to 421 (EVTKQGYLLK…WVNKITAAIT (132 aa)). The Arf-GAP domain occupies 467 to 604 (DDVLTILREI…ALVVKDEREA (138 aa)). The segment at 482-505 (CAECNAPDPDWASLNLGVLMCIEC) adopts a C4-type zinc-finger fold. 2 ANK repeats span residues 683–712 (QGCS…DINM) and 716–745 (HGRT…RPSI).

As to expression, expressed in roots, hypocotyls, cotyledons, leaf and shoot apical meristems and siliques.

Its function is as follows. Probable GTPase-activating protein. The protein is ADP-ribosylation factor GTPase-activating protein AGD2 (AGD2) of Arabidopsis thaliana (Mouse-ear cress).